The sequence spans 301 residues: MAANYWASTQRRHWLFTKERLADIRESFRERDKAAHSQFPLPDQRLLNIYFSQQLIKLGKRMSTRQQALATAQVYIKRFYTKNEIRHTNPYLVVTTAFYLACKMEECPQHIRFVVAEARNFWPEFIAPDVSKLGECEFALISEMNSQLIVHHPYRTLSELQPELSLTSDEVALAWSVINDHYLTDLPLLYPPHVIAVMAIIVAVVFKPSQTSFHGTAAPLAGAMRDGGMNILAALGDKNGAGPPPRIQKLVGWLAESEVDIRAVIECTQELVSLYEIWENYSEKHCKELLGRMVKSKNLDK.

In terms of domain architecture, Cyclin N-terminal spans 53–142 (QQLIKLGKRM…LGECEFALIS (90 aa)).

It belongs to the cyclin family. Cyclin C subfamily. As to quaternary structure, component of the srb8-11 complex, a regulatory module of the Mediator complex.

Its subcellular location is the nucleus. Component of the srb8-11 complex. The srb8-11 complex is a regulatory module of the Mediator complex which is itself involved in regulation of basal and activated RNA polymerase II-dependent transcription. The srb8-11 complex may be involved in the transcriptional repression of a subset of genes regulated by Mediator. It may inhibit the association of the Mediator complex with RNA polymerase II to form the holoenzyme complex. The srb8-11 complex phosphorylates the C-terminal domain (CTD) of the largest subunit of RNA polymerase II. The polypeptide is RNA polymerase II holoenzyme cyclin-like subunit (ssn8) (Aspergillus oryzae (strain ATCC 42149 / RIB 40) (Yellow koji mold)).